The following is a 180-amino-acid chain: Pituitary tumor-transforming gene 1 protein-interacting protein (180 aa).

The N-terminal stretch at 1–32 is a signal peptide; the sequence is MAPGVARGPTPYWRLRLGGAALLLLLIPVAAA. Residues 33 to 96 are Extracellular-facing; it reads QEPPGAACSQ…RWGVCWVNFE (64 aa). The PSI domain maps to 39 to 92; the sequence is ACSQNTNKTCEECLKNVSCLWCNTNKACLDYPVTSVLPPASLCKLSSARWGVCW. Residues Asn45 and Asn54 are each glycosylated (N-linked (GlcNAc...) asparagine). Residues 97–117 traverse the membrane as a helical segment; it reads ALIITMSVVGGTLLLGIAICC. Residues 118–180 lie on the Cytoplasmic side of the membrane; that stretch reads CCCCRRKRSR…ENPYARFENN (63 aa). Residues 130 to 165 adopt a coiled-coil conformation; the sequence is DRSEEKAMREREERRIRQEERRAEMKTRHDEIRKKY. Positions 131–157 are disordered; that stretch reads RSEEKAMREREERRIRQEERRAEMKTR. The residue at position 174 (Tyr174) is a Phosphotyrosine.

As to quaternary structure, interacts with PTTG1. Ubiquitous.

The protein resides in the membrane. It is found in the cytoplasm. Its subcellular location is the nucleus. Functionally, may facilitate PTTG1 nuclear translocation. This is Pituitary tumor-transforming gene 1 protein-interacting protein (PTTG1IP) from Homo sapiens (Human).